The chain runs to 424 residues: Methylenetetrahydrofolate--tRNA-(uracil-5-)-methyltransferase TrmFO 1 (424 aa).

8-13 contributes to the FAD binding site; sequence GAGLSG.

The protein belongs to the MnmG family. TrmFO subfamily. Requires FAD as cofactor.

The protein resides in the cytoplasm. The catalysed reaction is uridine(54) in tRNA + (6R)-5,10-methylene-5,6,7,8-tetrahydrofolate + NADH + H(+) = 5-methyluridine(54) in tRNA + (6S)-5,6,7,8-tetrahydrofolate + NAD(+). It catalyses the reaction uridine(54) in tRNA + (6R)-5,10-methylene-5,6,7,8-tetrahydrofolate + NADPH + H(+) = 5-methyluridine(54) in tRNA + (6S)-5,6,7,8-tetrahydrofolate + NADP(+). Functionally, catalyzes the folate-dependent formation of 5-methyl-uridine at position 54 (M-5-U54) in all tRNAs. This is Methylenetetrahydrofolate--tRNA-(uracil-5-)-methyltransferase TrmFO 1 from Mycoplasma mycoides subsp. mycoides SC (strain CCUG 32753 / NCTC 10114 / PG1).